The primary structure comprises 195 residues: MQQKTISIEQREKAGKGVSRKLRAVGRVPGVVYGKGIEPVAVSVDAKELAAAIVGEGGRNNLISLQGGGSLNGNTVIVADLQKAPLKGTFISVDFHKINMDEKVRVHVPVALIGTALGAKEGGMLELVMHSLDLECLPSQIPEHVEVDVTNLAIGHAIHVGELVLAAGVKALDDPKATIVSVHGKTKEEVTVEEG.

The protein belongs to the bacterial ribosomal protein bL25 family. CTC subfamily. Part of the 50S ribosomal subunit; part of the 5S rRNA/L5/L18/L25 subcomplex. Contacts the 5S rRNA. Binds to the 5S rRNA independently of L5 and L18.

In terms of biological role, this is one of the proteins that binds to the 5S RNA in the ribosome where it forms part of the central protuberance. This chain is Large ribosomal subunit protein bL25, found in Geobacter metallireducens (strain ATCC 53774 / DSM 7210 / GS-15).